The chain runs to 363 residues: RNA polymerase I-specific transcription initiation factor RRN5 (363 aa).

The tract at residues 301–344 (LSRRDAPPVHQDENQENQENQENQEQDNTASEGESEAERDEIDE) is disordered. Residues 302–313 (SRRDAPPVHQDE) show a composition bias toward basic and acidic residues. Residues 317-328 (NQENQENQEQDN) are compositionally biased toward low complexity. A compositionally biased stretch (acidic residues) spans 333–344 (GESEAERDEIDE).

Component of the UAF (upstream activation factor) complex which consists of UAF30, RRN5, RRN9, RRN10, and histones H3 and H4.

The protein resides in the nucleus. Its subcellular location is the nucleolus. Functionally, component of the UAF (upstream activation factor) complex which interacts with the upstream element of the RNA polymerase I promoter and forms a stable preinitiation complex. Together with SPT15/TBP UAF seems to stimulate basal transcription to a fully activated level. The polypeptide is RNA polymerase I-specific transcription initiation factor RRN5 (RRN5) (Saccharomyces cerevisiae (strain ATCC 204508 / S288c) (Baker's yeast)).